The primary structure comprises 1054 residues: Calcium-transporting ATPase 2, endoplasmic reticulum-type (1054 aa).

The Cytoplasmic portion of the chain corresponds to 1-53 (MEEEKSFSAWSWSVEQCLKEYKTRLDKGLTSEDVQIRRQKYGFNELAKEKGKP). A helical transmembrane segment spans residues 54 to 74 (LWHLVLEQFDDTLVKILLGAA). The Lumenal segment spans residues 75-98 (FISFVLAFLGEEHGSGSGFEAFVE). A helical membrane pass occupies residues 99-118 (PFVIVLILILNAVVGVWQES). At 119–262 (NAEKALEALK…ESETPLKKKL (144 aa)) the chain is on the cytoplasmic side. A helical membrane pass occupies residues 263–282 (DEFGSRLTTAICIVCVLVWM). At 283-312 (INYKNFVSWDVVDGYKPVNIKFSFEKCTYY) the chain is on the lumenal side. Residues 313–330 (FKIAVALAVAAIPEGLPA) form a helical membrane-spanning segment. Ca(2+) contacts are provided by V321, A322, I324, and E326. Topologically, residues 331–782 (VITTCLALGT…AEGRSIYNNM (452 aa)) are cytoplasmic. The active-site 4-aspartylphosphate intermediate is the D368. Positions 727 and 731 each coordinate Mg(2+). Residues 783-802 (KAFIRYMISSNVGEVISIFL) traverse the membrane as a helical segment. Ca(2+)-binding residues include N793 and E796. Over 803–812 (TAALGIPECM) the chain is Lumenal. Residues 813 to 833 (IPVQLLWVNLVTDGPPATALG) traverse the membrane as a helical segment. N821, T824, and D825 together coordinate Ca(2+). Residues 834 to 853 (FNPADIDIMKKPPRKSDDCL) lie on the Cytoplasmic side of the membrane. Residues 854–876 (IDSWVLIRYLVIGSYVGVATVGI) traverse the membrane as a helical segment. Residues 877-949 (FVLWYTQASF…YFTLGKVKPM (73 aa)) lie on the Lumenal side of the membrane. Residues 950-969 (TLSLTVLVAIEMFNSLNALS) form a helical membrane-spanning segment. E960 provides a ligand contact to Ca(2+). Over 970–982 (EDNSLLTMPPWRN) the chain is Cytoplasmic. A helical membrane pass occupies residues 983-1001 (PWLLVAMTVSFALHCVILY). Residues 1002–1016 (VPFLANVFGIVPLSF) lie on the Lumenal side of the membrane. Residues 1017–1037 (REWFVVILVSFPVILIDEALK) form a helical membrane-spanning segment. Topologically, residues 1038–1054 (FIGRCRRTRIKKKIKTM) are cytoplasmic.

It belongs to the cation transport ATPase (P-type) (TC 3.A.3) family. Type IIA subfamily.

It is found in the membrane. The enzyme catalyses Ca(2+)(in) + ATP + H2O = Ca(2+)(out) + ADP + phosphate + H(+). In terms of biological role, this magnesium-dependent enzyme catalyzes the hydrolysis of ATP coupled with the translocation of calcium from the cytosol to an endomembrane compartment. The sequence is that of Calcium-transporting ATPase 2, endoplasmic reticulum-type (ECA2) from Arabidopsis thaliana (Mouse-ear cress).